A 153-amino-acid chain; its full sequence is TM2 domain-containing protein DDB_G0277895 (153 aa).

The region spanning 3–50 (QKSVCVTYLLWLFFGLFGIHRFYLNRPCSGVLYLFTCGCFFIGWFIDI) is the TM2 domain. The next 2 membrane-spanning stretches (helical) occupy residues 6–26 (VCVT…RFYL) and 33–53 (VLYL…ICLI). The disordered stretch occupies residues 85–153 (GSPQQQPYGA…GNYPPPYGPQ (69 aa)). Repeat copies occupy residues 89–96 (QQPYGAPP), 97–104 (QQPYGAPP), 105–112 (QQPYGAPP), 113–120 (QQPYGAPP), 121–128 (QQPYGAPP), and 129–136 (PQPYGAPP). The segment at 89 to 136 (QQPYGAPPQQPYGAPPQQPYGAPPQQPYGAPPQQPYGAPPPQPYGAPP) is 6 X 8 AA tandem repeat of Q-Q-P-Y-G-A-P-P. Residues 93–153 (GAPPQQPYGA…GNYPPPYGPQ (61 aa)) are compositionally biased toward pro residues.

Belongs to the TM2 family.

Its subcellular location is the membrane. This Dictyostelium discoideum (Social amoeba) protein is TM2 domain-containing protein DDB_G0277895.